Here is a 275-residue protein sequence, read N- to C-terminus: Uronate dehydrogenase (275 aa).

NAD(+) contacts are provided by residues 22-23, 42-44, 60-61, and 80-84; these read GL, DIA, DL, and FGGVS. Substrate contacts are provided by residues serine 84 and 120–122; that span reads SNH. Catalysis depends on tyrosine 145, which acts as the Proton acceptor. NAD(+) is bound at residue lysine 149. Position 174 (serine 174) interacts with substrate. Serine 175 is a binding site for NAD(+). Arginine 183 lines the substrate pocket.

It belongs to the NAD(P)-dependent epimerase/dehydratase family. Homohexamer.

The enzyme catalyses beta-D-galacturonate + NAD(+) = D-galactaro-1,5-lactone + NADH + H(+). The catalysed reaction is beta-D-glucuronate + NAD(+) = D-glucaro-1,5-lactone + NADH + H(+). Its pathway is carbohydrate acid metabolism; D-galacturonate degradation via prokaryotic oxidative pathway. Functionally, catalyzes the oxidation of beta-D-galacturonate and beta-D-glucuronate to galactarate and D-glucarate, respectively. Cannot use NADP(+) instead of NAD(+) as cosubstrate. The polypeptide is Uronate dehydrogenase (udh) (Pseudomonas syringae pv. tomato (strain ATCC BAA-871 / DC3000)).